The primary structure comprises 844 residues: Putative ubiquitin thioesterase 232R (844 aa).

Disordered regions lie at residues 136 to 223, 261 to 287, 326 to 377, and 422 to 541; these read NSST…DEAE, SRRKSPSPSPVPPSTRCDPTTTAPPME, LLNG…PELT, and QKKQ…KLSV. Residues 137–216 show a composition bias toward low complexity; it reads SSTRSRSPSV…PSRQSVRQSS (80 aa). Low complexity-rich tracts occupy residues 332 to 341 and 354 to 364; these read RPSPSLPQSR and RSPSVGSPSVR. Over residues 429-438 the composition is skewed to pro residues; the sequence is SPSPTPPSPV. The span at 472–485 shows a compositional bias: basic and acidic residues; sequence VQKKMGKSGEREPK. A compositionally biased stretch (low complexity) spans 504–518; sequence SLRSRLSTQQQTQQS. Basic and acidic residues predominate over residues 526-535; it reads ESIKPEESVR. The region spanning 590 to 725 is the OTU domain; sequence YTVKQVSGDG…NYHYTSLVPI (136 aa). The active site involves Asp-598. Residue Cys-601 is the Nucleophile of the active site. Residue His-718 is part of the active site.

The catalysed reaction is Thiol-dependent hydrolysis of ester, thioester, amide, peptide and isopeptide bonds formed by the C-terminal Gly of ubiquitin (a 76-residue protein attached to proteins as an intracellular targeting signal).. Functionally, hydrolase that can remove conjugated ubiquitin from proteins and may therefore play an important regulatory role at the level of protein turnover by preventing degradation. The protein is Putative ubiquitin thioesterase 232R of Aedes vexans (Inland floodwater mosquito).